Here is a 516-residue protein sequence, read N- to C-terminus: ADP-ribosylation factor GTPase-activating protein 3 (516 aa).

Residues 10–126 (LTIFKRLRSV…IKSLASQATR (117 aa)) form the Arf-GAP domain. The C4-type zinc finger occupies 25–48 (CFDCGAKNPSWASITYGVFLCIDC). The segment at 170–199 (AEPSSLTSRPVETTLENNEGGQEQGPSVEG) is disordered. Residues 173–194 (SSLTSRPVETTLENNEGGQEQG) are compositionally biased toward polar residues. Residue serine 231 is modified to Phosphoserine. Positions 243-264 (NEIEKQAQAADKMKEQEDLAKA) form a coiled coil. Phosphoserine is present on residues serine 270, serine 274, serine 331, and serine 370. The segment at 392–414 (KTTGYSDRPTARRKPDYEPVENT) is disordered. 6 positions are modified to phosphoserine: serine 428, serine 451, serine 453, serine 455, serine 457, and serine 458.

It is found in the cytoplasm. The protein resides in the golgi apparatus membrane. GAP activity stimulated by phosphatidylinositol 4,5-bisphosphate (PIP2). In terms of biological role, GTPase-activating protein (GAP) for ADP ribosylation factor 1 (ARF1). Hydrolysis of ARF1-bound GTP may lead to dissociation of coatomer from Golgi-derived membranes to allow fusion with target membranes. This Macaca fascicularis (Crab-eating macaque) protein is ADP-ribosylation factor GTPase-activating protein 3.